The sequence spans 447 residues: ATP-dependent protease ATPase subunit HslU (447 aa).

ATP contacts are provided by residues I17 and G59–E64. Positions P136 to T160 are disordered. Positions A148–A159 are enriched in basic and acidic residues. ATP is bound by residues D260, E325, and R397.

This sequence belongs to the ClpX chaperone family. HslU subfamily. As to quaternary structure, a double ring-shaped homohexamer of HslV is capped on each side by a ring-shaped HslU homohexamer. The assembly of the HslU/HslV complex is dependent on binding of ATP.

The protein localises to the cytoplasm. Functionally, ATPase subunit of a proteasome-like degradation complex; this subunit has chaperone activity. The binding of ATP and its subsequent hydrolysis by HslU are essential for unfolding of protein substrates subsequently hydrolyzed by HslV. HslU recognizes the N-terminal part of its protein substrates and unfolds these before they are guided to HslV for hydrolysis. In Coxiella burnetii (strain Dugway 5J108-111), this protein is ATP-dependent protease ATPase subunit HslU.